The following is a 321-amino-acid chain: Glucokinase (321 aa).

Residue glycine 8–threonine 13 participates in ATP binding.

The protein belongs to the bacterial glucokinase family.

Its subcellular location is the cytoplasm. The catalysed reaction is D-glucose + ATP = D-glucose 6-phosphate + ADP + H(+). The chain is Glucokinase from Citrobacter koseri (strain ATCC BAA-895 / CDC 4225-83 / SGSC4696).